Consider the following 376-residue polypeptide: 26S proteasome non-ATPase regulatory subunit 13 (376 aa).

In terms of domain architecture, PCI spans 171–338 (SYYKDALRFL…KRVHMTWVQP (168 aa)). The residue at position 298 (Lys298) is an N6-acetyllysine.

The protein belongs to the proteasome subunit S11 family. In terms of assembly, component of the 19S proteasome regulatory particle complex. The 26S proteasome consists of a 20S core particle (CP) and two 19S regulatory subunits (RP). The regulatory particle is made of a lid composed of 9 subunits including PSMD13, a base containing 6 ATPases and few additional components.

In terms of biological role, component of the 26S proteasome, a multiprotein complex involved in the ATP-dependent degradation of ubiquitinated proteins. This complex plays a key role in the maintenance of protein homeostasis by removing misfolded or damaged proteins, which could impair cellular functions, and by removing proteins whose functions are no longer required. Therefore, the proteasome participates in numerous cellular processes, including cell cycle progression, apoptosis, or DNA damage repair. The chain is 26S proteasome non-ATPase regulatory subunit 13 (PSMD13) from Homo sapiens (Human).